The chain runs to 964 residues: Chromatin assembly factor 1 subunit A (964 aa).

The interval 1-49 is binds to PCNA; the sequence is MLEEPECGAPGARGEAAAMDCKDRPAFPVKKLIQARLPFKRLNLVPKEK. The segment at 1–316 is binds to CBX1 chromo shadow domain; it reads MLEEPECGAP…LHTGPSPFPA (316 aa). A phosphoserine mark is found at S126, S141, and S144. A disordered region spans residues 146–232; it reads AQKNINGVPD…KDRDGWSEAG (87 aa). Positions 156-172 are enriched in basic and acidic residues; the sequence is KAGDDRGLPKARQKDEL. A Glycyl lysine isopeptide (Lys-Gly) (interchain with G-Cter in SUMO1); alternate cross-link involves residue K185. A Glycyl lysine isopeptide (Lys-Gly) (interchain with G-Cter in SUMO2); alternate cross-link involves residue K185. The PxVxL motif signature appears at 236–249; that stretch reads FKGKMPVVVLQDIL. 2 disordered regions span residues 253-437 and 601-641; these read PPAR…REEE and DSDE…VPHG. The span at 284–298 shows a compositional bias: low complexity; that stretch reads LSHSSLSSSSPTSSP. A Phosphoserine modification is found at S312. Residues 329 to 453 are a coiled coil; sequence RGSAEKNKMK…KAEITRFFQK (125 aa). Basic and acidic residues predominate over residues 331 to 437; the sequence is SAEKNKMKLQ…EEEKRLREEE (107 aa). Acidic residues-rich tracts occupy residues 601-612 and 620-635; these read DSDEEWEEEEPG and GDDD…EDDG. The necessary for homodimerization and competence for chromatin assembly stretch occupies residues 644–680; it reads SEDEGVTEECADPENHKVRQKLKAKEWDEFLAKGKRF. The interval 662–964 is binds to p60; sequence RQKLKAKEWD…FVSPSSLRLS (303 aa). Position 723 is a phosphothreonine (T723). Positions 769–799 are disordered; the sequence is RDAGSPEDSAASPPSPGPARPQTPTASEDVA. Residues 770–780 are compositionally biased toward low complexity; that stretch reads DAGSPEDSAAS. Residues S773, S783, S811, S876, and S881 each carry the phosphoserine modification. Positions 859–878 are disordered; that stretch reads EDSGSVPAPGPGQGMPVSLK. Disordered stretches follow at residues 897-920 and 933-964; these read DGQV…DDEG and IQAP…LRLS. Positions 904 to 920 are enriched in acidic residues; sequence DLDDFQADTEEEDDDEG. The span at 949–964 shows a compositional bias: polar residues; sequence MDTSESFVSPSSLRLS. S959 carries the post-translational modification Phosphoserine.

Belongs to the CHAF1A family. In terms of assembly, homodimer. Part of the CAF-1 complex that contains RBBP4, CHAF1B and CHAF1A. CHAF1A binds directly to CHAF1B. Only minor amounts of RBBP4 are complexed with CHAF1A and CHAF1B in G1 phase. Interacts with PCNA; the interaction is direct. Interacts (via the PxVxL motif) with CBX5; the interaction is direct. Interacts with MBD1. Interacts with histones H3.1, H3.2 and H3.1t.

The protein localises to the nucleus. Acts as a component of the histone chaperone complex chromatin assembly factor 1 (CAF-1), which assembles histone octamers onto DNA during replication and repair. CAF-1 performs the first step of the nucleosome assembly process, bringing newly synthesized histones H3 and H4 to replicating DNA; histones H2A/H2B can bind to this chromatin precursor subsequent to DNA replication to complete the histone octamer. It may play a role in heterochromatin maintenance in proliferating cells by bringing newly synthesized cbx proteins to heterochromatic DNA replication foci. The chain is Chromatin assembly factor 1 subunit A (CHAF1A) from Bos taurus (Bovine).